A 488-amino-acid chain; its full sequence is UDP-N-acetylmuramate--L-alanine ligase (488 aa).

G122 to T128 is a binding site for ATP.

Belongs to the MurCDEF family.

The protein resides in the cytoplasm. It catalyses the reaction UDP-N-acetyl-alpha-D-muramate + L-alanine + ATP = UDP-N-acetyl-alpha-D-muramoyl-L-alanine + ADP + phosphate + H(+). The protein operates within cell wall biogenesis; peptidoglycan biosynthesis. Functionally, cell wall formation. The protein is UDP-N-acetylmuramate--L-alanine ligase of Mycobacterium marinum (strain ATCC BAA-535 / M).